Consider the following 445-residue polypeptide: Serine/threonine-protein kinase Nek2 (445 aa).

Residues 8 to 271 form the Protein kinase domain; that stretch reads YEVLYTIGTG…VEEILENPLI (264 aa). Residues 14–22 and K37 each bind ATP; that span reads IGTGSYGRC. The active-site Proton acceptor is the D141. Phosphothreonine; by autocatalysis is present on T170. S171 carries the phosphoserine; by autocatalysis modification. A phosphothreonine; by autocatalysis mark is found at T175 and T179. Phosphoserine is present on S184. Position 241 is a phosphoserine; by autocatalysis (S241). An interaction with PCNT region spans residues 264–445; the sequence is EILENPLIAD…LKSRQILGMR (182 aa). A phosphoserine mark is found at S296 and S300. The interaction with CEP85 stretch occupies residues 301-445; that stretch reads PVLSELKLKE…LKSRQILGMR (145 aa). The stretch at 303–362 forms a coiled coil; the sequence is LSELKLKEIQLQERERALKAREERLEQKEQELCVRERLAEDKLARAENLLKNYSLLKERK. Residues 306-334 form a leucine-zipper region; that stretch reads LKLKEIQLQERERALKAREERLEQKEQEL. The interval 329 to 445 is necessary for interaction with MAD1L1; sequence QKEQELCVRE…LKSRQILGMR (117 aa). Positions 333–370 are required for microtubule binding and for localization to the centrosomes; the sequence is ELCVRERLAEDKLARAENLLKNYSLLKERKFLSLASNP. 2 positions are modified to phosphoserine; by STK3/MST2: S356 and S365. Residues S387, S390, S397, and S402 each carry the phosphoserine modification. The interaction with SAV1 and STK3/MST2 stretch occupies residues 403–439; that stretch reads QLTSKSKCKDLKKRLHAAQLRAQALSDIEKNYQLKSR. S406 carries the post-translational modification Phosphoserine; by STK3/MST2. The stretch at 406–430 forms a coiled coil; it reads SKSKCKDLKKRLHAAQLRAQALSDI. S428 carries the post-translational modification Phosphoserine. S438 bears the Phosphoserine; by STK3/MST2 mark.

Belongs to the protein kinase superfamily. NEK Ser/Thr protein kinase family. NIMA subfamily. As to quaternary structure, isoform 1, isoform 2 and isoform 4 form homo- and heterodimers. Interacts with NECAB3 and HMGA2. Isoform 1 interacts with CDC20, CTNB1, MAD1L1, MAPK, NEK11, NPM1, NDC80, PCNT and SGO1. Isoform 1 interacts with STK3/MST2 (via SARAH domain) and SAV1 (via SARAH domain). Isoform 1 and isoform 2 interact with MAD2L1. Isoform 1 and isoform 4 interact with PPP1CA and PPP1CC. Interacts with CEP68; the interaction leads to phosphorylation of CEP68. Interacts with CNTLN; the interaction leads to phosphorylation of CNTLN. Isoform 1 interacts with CEP85. Interacts with CCDC102B; the interaction leads to phosphorylation of CCDC102B. Requires Mg(2+) as cofactor. In terms of processing, activated by autophosphorylation. Protein phosphatase 1 represses autophosphorylation and activation of isoform 1 by dephosphorylation. Phosphorylation by STK3/MST2 is necessary for its localization to the centrosome. In terms of tissue distribution, isoform 1 and isoform 2 are expressed in peripheral blood T-cells and a wide variety of transformed cell types. Isoform 1 and isoform 4 are expressed in the testis. Up-regulated in various cancer cell lines, as well as primary breast tumors.

The protein resides in the nucleus. It localises to the nucleolus. It is found in the cytoplasm. The protein localises to the cytoskeleton. Its subcellular location is the microtubule organizing center. The protein resides in the centrosome. It localises to the spindle pole. It is found in the chromosome. The protein localises to the centromere. Its subcellular location is the kinetochore. It catalyses the reaction L-seryl-[protein] + ATP = O-phospho-L-seryl-[protein] + ADP + H(+). It carries out the reaction L-threonyl-[protein] + ATP = O-phospho-L-threonyl-[protein] + ADP + H(+). Its activity is regulated as follows. Isoform 1 is inhibited by ionizing radiation in the presence of PPP1CA. Its catalytic activity is inhibited by the inhibitor CCT241950. In the presence of this inhibitor, displays an autoinhibited conformation: Tyr-70 side chain points into the active site, interacts with the activation loop, and blocks the alphaC helix. Its function is as follows. Protein kinase which is involved in the control of centrosome separation and bipolar spindle formation in mitotic cells and chromatin condensation in meiotic cells. Regulates centrosome separation (essential for the formation of bipolar spindles and high-fidelity chromosome separation) by phosphorylating centrosomal proteins such as CROCC, CEP250 and NINL, resulting in their displacement from the centrosomes. Regulates kinetochore microtubule attachment stability in mitosis via phosphorylation of NDC80. Involved in regulation of mitotic checkpoint protein complex via phosphorylation of CDC20 and MAD2L1. Plays an active role in chromatin condensation during the first meiotic division through phosphorylation of HMGA2. Phosphorylates: PPP1CC; SGO1; NECAB3 and NPM1. Essential for localization of MAD2L1 to kinetochore and MAPK1 and NPM1 to the centrosome. Phosphorylates CEP68 and CNTLN directly or indirectly. NEK2-mediated phosphorylation of CEP68 promotes CEP68 dissociation from the centrosome and its degradation at the onset of mitosis. Involved in the regulation of centrosome disjunction. Phosphorylates CCDC102B either directly or indirectly which causes CCDC102B to dissociate from the centrosome and allows for centrosome separation. In terms of biological role, phosphorylates and activates NEK11 in G1/S-arrested cells. Not present in the nucleolus and, in contrast to isoform 1, does not phosphorylate and activate NEK11 in G1/S-arrested cells. The chain is Serine/threonine-protein kinase Nek2 (NEK2) from Homo sapiens (Human).